A 519-amino-acid chain; its full sequence is Serine/threonine-protein kinase RIO3 (519 aa).

2 positions are modified to phosphoserine: S8 and S112. Residues 121 to 159 (PYEDSDSSEDEVDWQDTRDDPYRPAKPVPTPKKGFIGKG) are disordered. Y122 is subject to Phosphotyrosine. The span at 124-134 (DSDSSEDEVDW) shows a compositional bias: acidic residues. Phosphoserine occurs at positions 125, 127, and 128. Residues 251–519 (ETITGCISTG…DGDPPLLYDE (269 aa)) form the Protein kinase domain. ATP is bound by residues 257–265 (ISTGKESVV) and K290. D406 serves as the catalytic Proton acceptor.

The protein belongs to the protein kinase superfamily. RIO-type Ser/Thr kinase family. Interacts with CASP10. Interacts with IRF3; RIOK3 probably mediates the interaction of TBK1 with IRF3. Associated with 40S pre-ribosomal particles. Mg(2+) is required as a cofactor. Autophosphorylated (in vitro). As to expression, widely expressed.

It localises to the cytoplasm. The enzyme catalyses L-seryl-[protein] + ATP = O-phospho-L-seryl-[protein] + ADP + H(+). The catalysed reaction is L-threonyl-[protein] + ATP = O-phospho-L-threonyl-[protein] + ADP + H(+). In terms of biological role, involved in regulation of type I interferon (IFN)-dependent immune response which plays a critical role in the innate immune response against DNA and RNA viruses. May act as an adapter protein essential for the recruitment of TBK1 to IRF3. Phosphorylates IFIH1 on 'Ser-828' interfering with IFIH1 filament assembly on long dsRNA and resulting in attenuated IFIH1-signaling. Can inhibit CASP10 isoform 7-mediated activation of the NF-kappaB signaling pathway. May play a role in the biogenesis of the 40S ribosomal subunit. Involved in the processing of 21S pre-rRNA to the mature 18S rRNA. The protein is Serine/threonine-protein kinase RIO3 (RIOK3) of Homo sapiens (Human).